Reading from the N-terminus, the 379-residue chain is Inactive 2'-5'-oligoadenylate synthase 1B (379 aa).

Residues Met1 to Gln355 lie on the Cytoplasmic side of the membrane. The chain crosses the membrane as a helical; Anchor for type IV membrane protein span at residues Asn356–Phe374. The Extracellular portion of the chain corresponds to Gly375–Val379.

The protein belongs to the 2-5A synthase family. Interacts with OSBPL1A and ABCF3. As to expression, highly expressed in the brain, liver, spleen and heart.

Its subcellular location is the endoplasmic reticulum membrane. Functionally, does not have 2'-5'-OAS activity, but can bind double-stranded RNA. Displays antiviral activity against viruses via an alternative antiviral pathway independent of RNase L. This chain is Inactive 2'-5'-oligoadenylate synthase 1B (Oas1b), found in Rattus norvegicus (Rat).